Reading from the N-terminus, the 608-residue chain is MSYTASPCPELVEPCAVHAEGMAQEESHRSQAPPTFYHGASQELDLSTKVYKRESGSPYSVLADTKMSKPHLHETEEQPYFREPRAVSDVHTVKEDRENSDDTEEEEEVSYKREQIIVEVNLNNQTLNVSKGEKGVSSQSKETPVLKTSSEEDEEETEEEATDNSSDYGENGRQKKKEKQVERVRVTQRRTRRAASAAAATTSPAPRTTRGRRKSAELPKRKKRATKEAKAPVQKAKCEEKETLTCEKCPRVFNTRWYLEKHMNVTHRRMQICDKCGKKFVLESELSLHQQTDCEKNIQCVSCNKSFKKLWSLHEHIKIVHGYAEKKFACEICEKKFYTMAHVRKHMVAHTKDMPFTCETCGKSFKRSMSLKVHSLQHSGEKPFRCENCDERFQYKYQLRSHMSIHIGHKQFMCQWCGKDFNMKQYFDEHMKTHTGEKPFICEICGKSFTSRPNMKRHRRTHTGEKPYPCDVCGQRFRFSNMLKAHKEKCFRVTSPVNVPPAVQIPLASAPAAPAPAVANTPTSPAPAVSMSPVGAVLPSRPVPHPFSHLHIHTHPHHAHHLPIPPVPHLPPPPALFKSEPLNHRSQSEDTFLRHLAEKNSAAPAQHH.

At serine 57 the chain carries Phosphoserine. The disordered stretch occupies residues 61-232; the sequence is VLADTKMSKP…KRATKEAKAP (172 aa). Residues 71–97 are compositionally biased toward basic and acidic residues; the sequence is HLHETEEQPYFREPRAVSDVHTVKEDR. Composition is skewed to acidic residues over residues 98–108 and 151–162; these read ENSDDTEEEEE and EEDEEETEEEAT. Residue serine 100 is modified to Phosphoserine. Threonine 103 is modified (phosphothreonine). Low complexity predominate over residues 194 to 208; it reads AASAAAATTSPAPRT. Residues serine 196 and serine 203 each carry the phosphoserine modification. The C2H2-type 1 zinc finger occupies 244 to 267; the sequence is LTCEKCPRVFNTRWYLEKHMNVTH. Residues 271-293 form a C2H2-type 2; degenerate zinc finger; sequence QICDKCGKKFVLESELSLHQQTD. C2H2-type zinc fingers lie at residues 298–321, 328–350, 356–378, 384–406, 412–434, and 440–462; these read IQCV…KIVH, FACE…MVAH, FTCE…SLQH, FRCE…MSIH, FMCQ…MKTH, and FICE…RRTH. Residues 468 to 491 form a C2H2-type 9; degenerate zinc finger; sequence YPCDVCGQRFRFSNMLKAHKEKCF. The interval 497-608 is mediates interaction with CBFA2T3; sequence VNVPPAVQIP…KNSAAPAQHH (112 aa).

This sequence belongs to the krueppel C2H2-type zinc-finger protein family. In terms of assembly, interacts with CBFA2T3.

Its subcellular location is the nucleus. Functions as a transcriptional repressor. This is Zinc finger protein 652 (Znf652) from Mus musculus (Mouse).